A 794-amino-acid polypeptide reads, in one-letter code: Mitochondrial intermediate peptidase (794 aa).

The N-terminal 39 residues, 1-39 (MRVTSSRLLQGGSLVSRVLKRRLNNASRTKKGWFSTRTL), are a transit peptide targeting the mitochondrion. His-581 contacts Zn(2+). Glu-582 is a catalytic residue. Residues His-585 and His-588 each contribute to the Zn(2+) site.

This sequence belongs to the peptidase M3 family. Zn(2+) serves as cofactor.

It is found in the mitochondrion matrix. The catalysed reaction is Release of an N-terminal octapeptide as second stage of processing of some proteins imported into the mitochondrion.. In terms of biological role, cleaves proteins, imported into the mitochondrion, to their mature size. While most mitochondrial precursor proteins are processed to the mature form in one step by mitochondrial processing peptidase (MPP), the sequential cleavage by MIP of an octapeptide after initial processing by MPP is a required step for a subgroup of nuclear-encoded precursor proteins destined for the matrix or the inner membrane. The polypeptide is Mitochondrial intermediate peptidase (OCT1) (Debaryomyces hansenii (strain ATCC 36239 / CBS 767 / BCRC 21394 / JCM 1990 / NBRC 0083 / IGC 2968) (Yeast)).